A 243-amino-acid polypeptide reads, in one-letter code: Zinc import ATP-binding protein ZnuC (243 aa).

The region spanning 25 to 242 is the ABC transporter domain; it reads LVVDSITLFY…AKFMSVFPEN (218 aa). 57–64 serves as a coordination point for ATP; the sequence is GPNGGGKT.

Belongs to the ABC transporter superfamily. Zinc importer (TC 3.A.1.15.5) family. The complex is composed of two ATP-binding proteins (ZnuC), two transmembrane proteins (ZnuB) and a solute-binding protein (ZnuA).

The protein resides in the cell inner membrane. The catalysed reaction is Zn(2+)(out) + ATP(in) + H2O(in) = Zn(2+)(in) + ADP(in) + phosphate(in) + H(+)(in). Part of the ABC transporter complex ZnuABC involved in zinc import. Responsible for energy coupling to the transport system. The sequence is that of Zinc import ATP-binding protein ZnuC from Anaplasma phagocytophilum (strain HZ).